A 358-amino-acid polypeptide reads, in one-letter code: tRNA-specific 2-thiouridylase MnmA (358 aa).

ATP is bound by residues Ala6–Ser13 and Leu32. Catalysis depends on Cys101, which acts as the Nucleophile. Cys101 and Cys193 are oxidised to a cystine. Position 125 (Gly125) interacts with ATP. An interaction with tRNA region spans residues Lys143–Gln145. Cys193 acts as the Cysteine persulfide intermediate in catalysis.

This sequence belongs to the MnmA/TRMU family.

It is found in the cytoplasm. It carries out the reaction S-sulfanyl-L-cysteinyl-[protein] + uridine(34) in tRNA + AH2 + ATP = 2-thiouridine(34) in tRNA + L-cysteinyl-[protein] + A + AMP + diphosphate + H(+). In terms of biological role, catalyzes the 2-thiolation of uridine at the wobble position (U34) of tRNA, leading to the formation of s(2)U34. The chain is tRNA-specific 2-thiouridylase MnmA from Mycobacterium leprae (strain Br4923).